The sequence spans 329 residues: DNA-directed RNA polymerase subunit alpha (329 aa).

An alpha N-terminal domain (alpha-NTD) region spans residues 1–235 (MQGSVTEFLK…EQLDAFVDLR (235 aa)). The segment at 249-329 (FDPILLRPVD…NWPPASIAED (81 aa)) is alpha C-terminal domain (alpha-CTD).

This sequence belongs to the RNA polymerase alpha chain family. In terms of assembly, homodimer. The RNAP catalytic core consists of 2 alpha, 1 beta, 1 beta' and 1 omega subunit. When a sigma factor is associated with the core the holoenzyme is formed, which can initiate transcription.

It carries out the reaction RNA(n) + a ribonucleoside 5'-triphosphate = RNA(n+1) + diphosphate. DNA-dependent RNA polymerase catalyzes the transcription of DNA into RNA using the four ribonucleoside triphosphates as substrates. In Aliivibrio salmonicida (strain LFI1238) (Vibrio salmonicida (strain LFI1238)), this protein is DNA-directed RNA polymerase subunit alpha.